A 311-amino-acid chain; its full sequence is Pyrimidine-specific ribonucleoside hydrolase RihA (311 aa).

Residue His240 is part of the active site.

It belongs to the IUNH family. RihA subfamily.

Its function is as follows. Hydrolyzes with equal efficiency cytidine or uridine to ribose and cytosine or uracil, respectively. The sequence is that of Pyrimidine-specific ribonucleoside hydrolase RihA from Escherichia coli O9:H4 (strain HS).